Here is a 338-residue protein sequence, read N- to C-terminus: Fructose-1,6-bisphosphatase class 1 (338 aa).

Mg(2+)-binding residues include glutamate 92, aspartate 115, leucine 117, and aspartate 118. Substrate contacts are provided by residues 118–121, asparagine 211, tyrosine 244, 262–264, and lysine 274; these read DGSS and YLY. Glutamate 280 contributes to the Mg(2+) binding site.

Belongs to the FBPase class 1 family. Homotetramer. Mg(2+) serves as cofactor.

It is found in the cytoplasm. The catalysed reaction is beta-D-fructose 1,6-bisphosphate + H2O = beta-D-fructose 6-phosphate + phosphate. Its pathway is carbohydrate biosynthesis; gluconeogenesis. In Vibrio parahaemolyticus serotype O3:K6 (strain RIMD 2210633), this protein is Fructose-1,6-bisphosphatase class 1.